We begin with the raw amino-acid sequence, 158 residues long: Cyclic pyranopterin monophosphate synthase (158 aa).

Residues Met-74–His-76 and Met-112–Glu-113 contribute to the substrate site. Asp-127 is an active-site residue.

It belongs to the MoaC family. Homohexamer; trimer of dimers.

It carries out the reaction (8S)-3',8-cyclo-7,8-dihydroguanosine 5'-triphosphate = cyclic pyranopterin phosphate + diphosphate. Its pathway is cofactor biosynthesis; molybdopterin biosynthesis. In terms of biological role, catalyzes the conversion of (8S)-3',8-cyclo-7,8-dihydroguanosine 5'-triphosphate to cyclic pyranopterin monophosphate (cPMP). The polypeptide is Cyclic pyranopterin monophosphate synthase (Helicobacter pylori (strain HPAG1)).